Consider the following 875-residue polypeptide: Protein translocase subunit SecA (875 aa).

ATP-binding positions include Q87, 105 to 109 (GEGKT), and D512. Zn(2+)-binding residues include C860, C862, C871, and H872.

The protein belongs to the SecA family. In terms of assembly, monomer and homodimer. Part of the essential Sec protein translocation apparatus which comprises SecA, SecYEG and auxiliary proteins SecDF-YajC and YidC. Requires Zn(2+) as cofactor.

Its subcellular location is the cell inner membrane. The protein localises to the cytoplasm. The catalysed reaction is ATP + H2O + cellular proteinSide 1 = ADP + phosphate + cellular proteinSide 2.. In terms of biological role, part of the Sec protein translocase complex. Interacts with the SecYEG preprotein conducting channel. Has a central role in coupling the hydrolysis of ATP to the transfer of proteins into and across the cell membrane, serving both as a receptor for the preprotein-SecB complex and as an ATP-driven molecular motor driving the stepwise translocation of polypeptide chains across the membrane. The sequence is that of Protein translocase subunit SecA from Buchnera aphidicola subsp. Acyrthosiphon pisum (strain 5A).